Consider the following 292-residue polypeptide: 33 kDa chaperonin (292 aa).

Cystine bridges form between cysteine 230/cysteine 232 and cysteine 263/cysteine 266.

Belongs to the HSP33 family. In terms of processing, under oxidizing conditions two disulfide bonds are formed involving the reactive cysteines. Under reducing conditions zinc is bound to the reactive cysteines and the protein is inactive.

Its subcellular location is the cytoplasm. Redox regulated molecular chaperone. Protects both thermally unfolding and oxidatively damaged proteins from irreversible aggregation. Plays an important role in the bacterial defense system toward oxidative stress. The protein is 33 kDa chaperonin of Escherichia coli O7:K1 (strain IAI39 / ExPEC).